The primary structure comprises 338 residues: Phenylalanine--tRNA ligase alpha subunit (338 aa).

Glu-252 is a binding site for Mg(2+).

The protein belongs to the class-II aminoacyl-tRNA synthetase family. Phe-tRNA synthetase alpha subunit type 1 subfamily. Tetramer of two alpha and two beta subunits. Mg(2+) is required as a cofactor.

It localises to the cytoplasm. It catalyses the reaction tRNA(Phe) + L-phenylalanine + ATP = L-phenylalanyl-tRNA(Phe) + AMP + diphosphate + H(+). The chain is Phenylalanine--tRNA ligase alpha subunit from Pseudomonas putida (strain ATCC 700007 / DSM 6899 / JCM 31910 / BCRC 17059 / LMG 24140 / F1).